A 306-amino-acid polypeptide reads, in one-letter code: uncharacterized protein (306 aa).

This is an uncharacterized protein from Escherichia coli (strain K12).